We begin with the raw amino-acid sequence, 424 residues long: MAKNIQAIRGMNDYLPADTAIWQRIESILKQVLSGYGYSEIRMPIVEQTPLFKRAIGEVTDVVEKEMYTFDDRNGESLTLRPEGTAGCVRAGIEHGLLYNQEQRLWYIGPMFRYERPQKGRYRQFHQLGAEVFGLPGPDIDAELILLTARWWRALGIFEHVKLELNSIGSLAARADYREALVAFLEQHVEVLDEDCKRRMYSNPLRVLDSKNPDVQQLLDDAPKLSDYLDEESKQHFAGLCELLDKASIPYTVNERLVRGLDYYNRTVFEWVTHSLGAQGTVCAGGRYDGLVEQLGGRATPAVGFAMGLERLVLLVQAVNADFQVPATVDAYVISSGEGAQSAAMLLAESLRDALPTLKIMTNYGGGNVKKQFTRADKWGARVALMLGESEVAAQQVVVKDLRNGEQETLAQADVAARLALMLG.

This sequence belongs to the class-II aminoacyl-tRNA synthetase family. In terms of assembly, homodimer.

It localises to the cytoplasm. It catalyses the reaction tRNA(His) + L-histidine + ATP = L-histidyl-tRNA(His) + AMP + diphosphate + H(+). The chain is Histidine--tRNA ligase from Yersinia pestis bv. Antiqua (strain Antiqua).